A 156-amino-acid chain; its full sequence is Small ribosomal subunit protein uS7 (156 aa).

It belongs to the universal ribosomal protein uS7 family. In terms of assembly, part of the 30S ribosomal subunit. Contacts proteins S9 and S11.

Functionally, one of the primary rRNA binding proteins, it binds directly to 16S rRNA where it nucleates assembly of the head domain of the 30S subunit. Is located at the subunit interface close to the decoding center, probably blocks exit of the E-site tRNA. The protein is Small ribosomal subunit protein uS7 of Pectobacterium atrosepticum (strain SCRI 1043 / ATCC BAA-672) (Erwinia carotovora subsp. atroseptica).